A 179-amino-acid polypeptide reads, in one-letter code: NAD(P)H-quinone oxidoreductase subunit I, chloroplastic (179 aa).

2 4Fe-4S ferredoxin-type domains span residues G55–R84 and L95–E124. [4Fe-4S] cluster is bound by residues C64, C67, C70, C74, C104, C107, C110, and C114.

It belongs to the complex I 23 kDa subunit family. As to quaternary structure, NDH is composed of at least 16 different subunits, 5 of which are encoded in the nucleus. The cofactor is [4Fe-4S] cluster.

It is found in the plastid. The protein resides in the chloroplast thylakoid membrane. The catalysed reaction is a plastoquinone + NADH + (n+1) H(+)(in) = a plastoquinol + NAD(+) + n H(+)(out). The enzyme catalyses a plastoquinone + NADPH + (n+1) H(+)(in) = a plastoquinol + NADP(+) + n H(+)(out). Functionally, NDH shuttles electrons from NAD(P)H:plastoquinone, via FMN and iron-sulfur (Fe-S) centers, to quinones in the photosynthetic chain and possibly in a chloroplast respiratory chain. The immediate electron acceptor for the enzyme in this species is believed to be plastoquinone. Couples the redox reaction to proton translocation, and thus conserves the redox energy in a proton gradient. The chain is NAD(P)H-quinone oxidoreductase subunit I, chloroplastic from Nymphaea alba (White water-lily).